The chain runs to 615 residues: 3-(3-hydroxy-phenyl)propionate/3-hydroxycinnamic acid hydroxylase 1 (615 aa).

A disordered region spans residues 1 to 20; the sequence is MRPAFEPAAGLGRAHPHETT. FAD-binding positions include 27-56 and 294-304; these read DVAI…VVEK and FRVKRILLAGD.

Belongs to the PheA/TfdB FAD monooxygenase family. The cofactor is FAD.

It catalyses the reaction 3-(3-hydroxyphenyl)propanoate + NADH + O2 + H(+) = 3-(2,3-dihydroxyphenyl)propanoate + NAD(+) + H2O. The enzyme catalyses (2E)-3-(3-hydroxyphenyl)prop-2-enoate + NADH + O2 + H(+) = (2E)-3-(2,3-dihydroxyphenyl)prop-2-enoate + NAD(+) + H2O. It participates in aromatic compound metabolism; 3-phenylpropanoate degradation. In terms of biological role, catalyzes the insertion of one atom of molecular oxygen into position 2 of the phenyl ring of 3-(3-hydroxyphenyl)propionate (3-HPP) and hydroxycinnamic acid (3HCI). This Burkholderia vietnamiensis (strain G4 / LMG 22486) (Burkholderia cepacia (strain R1808)) protein is 3-(3-hydroxy-phenyl)propionate/3-hydroxycinnamic acid hydroxylase 1.